The following is a 193-amino-acid chain: Leucyl/phenylalanyl-tRNA--protein transferase (193 aa).

It belongs to the L/F-transferase family.

The protein resides in the cytoplasm. The catalysed reaction is N-terminal L-lysyl-[protein] + L-leucyl-tRNA(Leu) = N-terminal L-leucyl-L-lysyl-[protein] + tRNA(Leu) + H(+). It carries out the reaction N-terminal L-arginyl-[protein] + L-leucyl-tRNA(Leu) = N-terminal L-leucyl-L-arginyl-[protein] + tRNA(Leu) + H(+). The enzyme catalyses L-phenylalanyl-tRNA(Phe) + an N-terminal L-alpha-aminoacyl-[protein] = an N-terminal L-phenylalanyl-L-alpha-aminoacyl-[protein] + tRNA(Phe). Its function is as follows. Functions in the N-end rule pathway of protein degradation where it conjugates Leu, Phe and, less efficiently, Met from aminoacyl-tRNAs to the N-termini of proteins containing an N-terminal arginine or lysine. This is Leucyl/phenylalanyl-tRNA--protein transferase from Akkermansia muciniphila (strain ATCC BAA-835 / DSM 22959 / JCM 33894 / BCRC 81048 / CCUG 64013 / CIP 107961 / Muc).